The primary structure comprises 245 residues: 4-hydroxy-tetrahydrodipicolinate reductase (245 aa).

NAD(+) contacts are provided by residues 7 to 12, 75 to 77, and 102 to 105; these read GAKGKV, GTT, and APNF. The active-site Proton donor/acceptor is His132. His133 is a (S)-2,3,4,5-tetrahydrodipicolinate binding site. Lys136 functions as the Proton donor in the catalytic mechanism. 142–143 serves as a coordination point for (S)-2,3,4,5-tetrahydrodipicolinate; the sequence is GT.

This sequence belongs to the DapB family.

It is found in the cytoplasm. It catalyses the reaction (S)-2,3,4,5-tetrahydrodipicolinate + NAD(+) + H2O = (2S,4S)-4-hydroxy-2,3,4,5-tetrahydrodipicolinate + NADH + H(+). The enzyme catalyses (S)-2,3,4,5-tetrahydrodipicolinate + NADP(+) + H2O = (2S,4S)-4-hydroxy-2,3,4,5-tetrahydrodipicolinate + NADPH + H(+). It functions in the pathway amino-acid biosynthesis; L-lysine biosynthesis via DAP pathway; (S)-tetrahydrodipicolinate from L-aspartate: step 4/4. Catalyzes the conversion of 4-hydroxy-tetrahydrodipicolinate (HTPA) to tetrahydrodipicolinate. This chain is 4-hydroxy-tetrahydrodipicolinate reductase, found in Mycolicibacterium gilvum (strain PYR-GCK) (Mycobacterium gilvum (strain PYR-GCK)).